Consider the following 358-residue polypeptide: 3-dehydroquinate synthase (358 aa).

Residues 70-75 (DGEQFK), 104-108 (GVIGD), 128-129 (TT), Lys141, Lys150, and 168-171 (CLHT) each bind NAD(+). Positions 183, 246, and 263 each coordinate Zn(2+).

Belongs to the sugar phosphate cyclases superfamily. Dehydroquinate synthase family. Requires Co(2+) as cofactor. The cofactor is Zn(2+). NAD(+) serves as cofactor.

Its subcellular location is the cytoplasm. The catalysed reaction is 7-phospho-2-dehydro-3-deoxy-D-arabino-heptonate = 3-dehydroquinate + phosphate. Its pathway is metabolic intermediate biosynthesis; chorismate biosynthesis; chorismate from D-erythrose 4-phosphate and phosphoenolpyruvate: step 2/7. Its function is as follows. Catalyzes the conversion of 3-deoxy-D-arabino-heptulosonate 7-phosphate (DAHP) to dehydroquinate (DHQ). The polypeptide is 3-dehydroquinate synthase (Shewanella baltica (strain OS185)).